The following is a 369-amino-acid chain: Glutamine synthetase (369 aa).

Positions 23 to 102 constitute a GS beta-grasp domain; that stretch reads VIAEYIWVDS…VLAECWNNDG (80 aa). Residues 109–369 form the GS catalytic domain; the sequence is HRHEAAKLFE…MSKEFERESS (261 aa).

It belongs to the glutamine synthetase family. In terms of assembly, homooctamer.

It is found in the cytoplasm. The enzyme catalyses L-glutamate + NH4(+) + ATP = L-glutamine + ADP + phosphate + H(+). The protein is Glutamine synthetase (GLN1) of Eremothecium gossypii (strain ATCC 10895 / CBS 109.51 / FGSC 9923 / NRRL Y-1056) (Yeast).